We begin with the raw amino-acid sequence, 748 residues long: Glucans biosynthesis glucosyltransferase H (748 aa).

The next 7 membrane-spanning stretches (helical) occupy residues 85–107 (LIVR…GYGM), 127–149 (FLVL…FVLL), 443–465 (GIGS…LISL), 494–516 (AWVF…LVLI), 529–551 (GRVL…CMMI), 587–606 (LAGP…SVSL), and 608–630 (LLLW…IMTS).

The protein belongs to the glycosyltransferase 2 family. OpgH subfamily.

The protein resides in the cell inner membrane. It participates in glycan metabolism; osmoregulated periplasmic glucan (OPG) biosynthesis. Involved in the biosynthesis of osmoregulated periplasmic glucans (OPGs). In Bradyrhizobium diazoefficiens (strain JCM 10833 / BCRC 13528 / IAM 13628 / NBRC 14792 / USDA 110), this protein is Glucans biosynthesis glucosyltransferase H.